The following is a 614-amino-acid chain: Chaperone protein HtpG (614 aa).

The interval 1 to 324 (MSQIETKEFQ…SEELPLNISR (324 aa)) is a; substrate-binding. The tract at residues 325–537 (ETMQDSALIA…SHYGTHSMQR (213 aa)) is b. The c stretch occupies residues 538–614 (MMQLMNRDLQ…LNEILEKALR (77 aa)).

Belongs to the heat shock protein 90 family. As to quaternary structure, homodimer.

It is found in the cytoplasm. Molecular chaperone. Has ATPase activity. This Desulfitobacterium hafniense (strain Y51) protein is Chaperone protein HtpG.